The following is a 128-amino-acid chain: Leucine-rich single-pass membrane protein 1 (128 aa).

The residue at position 24 (S24) is a Phosphoserine. The helical transmembrane segment at 65-85 threads the bilayer; sequence VGLIIVLIISLALVSFVIFLI. A coiled-coil region spans residues 87-111; that stretch reads QTENKMEDVSRRLAAEGKDIDDLKK.

It is found in the membrane. This Bos taurus (Bovine) protein is Leucine-rich single-pass membrane protein 1 (LSMEM1).